A 329-amino-acid chain; its full sequence is Cathepsin K (329 aa).

The N-terminal stretch at 1 to 15 (MWVFKFLLLPVVSFA) is a signal peptide. The propeptide at 16–114 (LSPEETLDTQ…TLYTPEWEGR (99 aa)) is activation peptide. Asparagine 103 is a glycosylation site (N-linked (GlcNAc...) asparagine). Intrachain disulfides connect cysteine 136/cysteine 177 and cysteine 170/cysteine 210. The active site involves cysteine 139. An N-linked (GlcNAc...) asparagine glycan is attached at asparagine 213. A disulfide bridge links cysteine 269 with cysteine 318. Catalysis depends on residues histidine 276 and asparagine 296.

Belongs to the peptidase C1 family.

The protein resides in the lysosome. It localises to the secreted. The protein localises to the apical cell membrane. It catalyses the reaction Broad proteolytic activity. With small-molecule substrates and inhibitors, the major determinant of specificity is P2, which is preferably Leu, Met &gt; Phe, and not Arg.. Its function is as follows. Thiol protease involved in osteoclastic bone resorption and may participate partially in the disorder of bone remodeling. Displays potent endoprotease activity against fibrinogen at acid pH. May play an important role in extracellular matrix degradation. Involved in the release of thyroid hormone thyroxine (T4) by limited proteolysis of TG/thyroglobulin in the thyroid follicle lumen. The sequence is that of Cathepsin K (Ctsk) from Rattus norvegicus (Rat).